We begin with the raw amino-acid sequence, 713 residues long: Polyphosphate kinase (713 aa).

An ATP-binding site is contributed by N63. Mg(2+)-binding residues include R394 and R424. H454 functions as the Phosphohistidine intermediate in the catalytic mechanism. Positions 487, 583, and 611 each coordinate ATP.

This sequence belongs to the polyphosphate kinase 1 (PPK1) family. Requires Mg(2+) as cofactor. An intermediate of this reaction is the autophosphorylated ppk in which a phosphate is covalently linked to a histidine residue through a N-P bond.

It catalyses the reaction [phosphate](n) + ATP = [phosphate](n+1) + ADP. Its function is as follows. Catalyzes the reversible transfer of the terminal phosphate of ATP to form a long-chain polyphosphate (polyP). This Prosthecochloris aestuarii (strain DSM 271 / SK 413) protein is Polyphosphate kinase.